Consider the following 247-residue polypeptide: Chymase (247 aa).

The first 19 residues, 1 to 19, serve as a signal peptide directing secretion; the sequence is MNLHALCLLLLLLGSSTKA. Positions 20 to 21 are cleaved as a propeptide — activation peptide; that stretch reads GE. The Peptidase S1 domain occupies 22–245; the sequence is IIGGTECIPH…YRPWINKILR (224 aa). Cysteines 51 and 67 form a disulfide. Histidine 66 functions as the Charge relay system in the catalytic mechanism. A glycan (N-linked (GlcNAc...) asparagine) is linked at asparagine 80. Aspartate 110 (charge relay system) is an active-site residue. 2 disulfides stabilise this stretch: cysteine 144/cysteine 209 and cysteine 175/cysteine 188. Serine 203 acts as the Charge relay system in catalysis.

It belongs to the peptidase S1 family. Granzyme subfamily. In terms of tissue distribution, mast cells.

The protein resides in the secreted. Its subcellular location is the cytoplasmic granule. It carries out the reaction Preferential cleavage: Phe-|-Xaa &gt; Tyr-|-Xaa &gt; Trp-|-Xaa &gt; Leu-|-Xaa.. Its function is as follows. Major secreted protease of mast cells with suspected roles in vasoactive peptide generation, extracellular matrix degradation, and regulation of gland secretion. In Rattus norvegicus (Rat), this protein is Chymase (Cma1).